Consider the following 336-residue polypeptide: Putative transcription factor avaE (336 aa).

The WRKY DNA-binding region spans 32–100; it reads TATRLNQTTF…VPLDQNESMP (69 aa).

It is found in the nucleus. Its pathway is secondary metabolite biosynthesis. Its function is as follows. Putative transcription factor; part of the cluster that mediates the biosynthesis of a highly modified cyclo-arginine-tryptophan dipeptide (cRW). This Aspergillus versicolor protein is Putative transcription factor avaE.